A 451-amino-acid chain; its full sequence is Phosphoglucosamine mutase (451 aa).

Ser-101 serves as the catalytic Phosphoserine intermediate. Mg(2+) contacts are provided by Ser-101, Asp-240, Asp-242, and Asp-244. At Ser-101 the chain carries Phosphoserine.

This sequence belongs to the phosphohexose mutase family. It depends on Mg(2+) as a cofactor. In terms of processing, activated by phosphorylation.

The enzyme catalyses alpha-D-glucosamine 1-phosphate = D-glucosamine 6-phosphate. Functionally, catalyzes the conversion of glucosamine-6-phosphate to glucosamine-1-phosphate. The protein is Phosphoglucosamine mutase of Streptococcus pyogenes serotype M12 (strain MGAS2096).